The following is a 477-amino-acid chain: Aspartyl/glutamyl-tRNA(Asn/Gln) amidotransferase subunit B (477 aa).

Belongs to the GatB/GatE family. GatB subfamily. In terms of assembly, heterotrimer of A, B and C subunits.

It catalyses the reaction L-glutamyl-tRNA(Gln) + L-glutamine + ATP + H2O = L-glutaminyl-tRNA(Gln) + L-glutamate + ADP + phosphate + H(+). It carries out the reaction L-aspartyl-tRNA(Asn) + L-glutamine + ATP + H2O = L-asparaginyl-tRNA(Asn) + L-glutamate + ADP + phosphate + 2 H(+). Its function is as follows. Allows the formation of correctly charged Asn-tRNA(Asn) or Gln-tRNA(Gln) through the transamidation of misacylated Asp-tRNA(Asn) or Glu-tRNA(Gln) in organisms which lack either or both of asparaginyl-tRNA or glutaminyl-tRNA synthetases. The reaction takes place in the presence of glutamine and ATP through an activated phospho-Asp-tRNA(Asn) or phospho-Glu-tRNA(Gln). The polypeptide is Aspartyl/glutamyl-tRNA(Asn/Gln) amidotransferase subunit B (Ureaplasma urealyticum serovar 10 (strain ATCC 33699 / Western)).